A 668-amino-acid chain; its full sequence is Biosynthetic arginine decarboxylase (668 aa).

K105 carries the post-translational modification N6-(pyridoxal phosphate)lysine. A substrate-binding site is contributed by 286–296 (LDVGGGLGVDY).

This sequence belongs to the Orn/Lys/Arg decarboxylase class-II family. SpeA subfamily. Requires Mg(2+) as cofactor. The cofactor is pyridoxal 5'-phosphate.

The catalysed reaction is L-arginine + H(+) = agmatine + CO2. Its function is as follows. Catalyzes the biosynthesis of agmatine from arginine. This Rhodopirellula baltica (strain DSM 10527 / NCIMB 13988 / SH1) protein is Biosynthetic arginine decarboxylase.